The sequence spans 105 residues: UPF0473 protein SAG2089 (105 aa).

This sequence belongs to the UPF0473 family.

This chain is UPF0473 protein SAG2089, found in Streptococcus agalactiae serotype V (strain ATCC BAA-611 / 2603 V/R).